We begin with the raw amino-acid sequence, 303 residues long: Acetylglutamate kinase (303 aa).

Substrate contacts are provided by residues 75–76 (GG), Arg-97, and Asn-194.

Belongs to the acetylglutamate kinase family. ArgB subfamily.

The protein resides in the cytoplasm. The catalysed reaction is N-acetyl-L-glutamate + ATP = N-acetyl-L-glutamyl 5-phosphate + ADP. Its pathway is amino-acid biosynthesis; L-arginine biosynthesis; N(2)-acetyl-L-ornithine from L-glutamate: step 2/4. Catalyzes the ATP-dependent phosphorylation of N-acetyl-L-glutamate. The chain is Acetylglutamate kinase from Gloeobacter violaceus (strain ATCC 29082 / PCC 7421).